The primary structure comprises 278 residues: Chitosanase (278 aa).

Positions 1 to 41 (MRLKHPTARLALAALLVAVPRSVAAAGTVHAAPAPAGATRL) are cleaved as a signal peptide. Catalysis depends on Glu63, which acts as the Proton donor. The active-site Nucleophile is Asp81.

It belongs to the glycosyl hydrolase 46 family.

Its subcellular location is the secreted. The enzyme catalyses Endohydrolysis of beta-(1-&gt;4)-linkages between D-glucosamine residues in a partly acetylated chitosan.. Aids in the defense against invading fungal pathogens by degrading their cell wall chitosan. This chain is Chitosanase (csn), found in Nocardioides sp. (strain N106).